The following is a 220-amino-acid chain: Adenylate kinase (220 aa).

Position 12-17 (glycine 12–threonine 17) interacts with ATP. Residues serine 32–valine 62 are NMP. Residues threonine 33, arginine 38, glutamate 60–valine 62, glycine 88–arginine 91, and glutamine 95 each bind AMP. The segment at alanine 129–aspartate 166 is LID. Arginine 130 is an ATP binding site. Positions 133 and 136 each coordinate Zn(2+). Isoleucine 139–tyrosine 140 lines the ATP pocket. Zn(2+) contacts are provided by cysteine 153 and cysteine 156. AMP contacts are provided by arginine 163 and arginine 174. ATP is bound at residue isoleucine 202.

This sequence belongs to the adenylate kinase family. In terms of assembly, monomer.

It localises to the cytoplasm. It catalyses the reaction AMP + ATP = 2 ADP. It participates in purine metabolism; AMP biosynthesis via salvage pathway; AMP from ADP: step 1/1. In terms of biological role, catalyzes the reversible transfer of the terminal phosphate group between ATP and AMP. Plays an important role in cellular energy homeostasis and in adenine nucleotide metabolism. The protein is Adenylate kinase of Thermotoga maritima (strain ATCC 43589 / DSM 3109 / JCM 10099 / NBRC 100826 / MSB8).